A 242-amino-acid chain; its full sequence is Probable transcriptional regulatory protein Bamb_2332 (242 aa).

The protein belongs to the TACO1 family.

It localises to the cytoplasm. The sequence is that of Probable transcriptional regulatory protein Bamb_2332 from Burkholderia ambifaria (strain ATCC BAA-244 / DSM 16087 / CCUG 44356 / LMG 19182 / AMMD) (Burkholderia cepacia (strain AMMD)).